A 138-amino-acid chain; its full sequence is Putative pre-16S rRNA nuclease (138 aa).

It belongs to the YqgF nuclease family.

The protein localises to the cytoplasm. Its function is as follows. Could be a nuclease involved in processing of the 5'-end of pre-16S rRNA. The sequence is that of Putative pre-16S rRNA nuclease from Citrobacter koseri (strain ATCC BAA-895 / CDC 4225-83 / SGSC4696).